We begin with the raw amino-acid sequence, 250 residues long: Ubiquinone/menaquinone biosynthesis C-methyltransferase UbiE (250 aa).

S-adenosyl-L-methionine is bound by residues threonine 74, aspartate 94, 122–123 (DA), and serine 139.

This sequence belongs to the class I-like SAM-binding methyltransferase superfamily. MenG/UbiE family.

It catalyses the reaction a 2-demethylmenaquinol + S-adenosyl-L-methionine = a menaquinol + S-adenosyl-L-homocysteine + H(+). The enzyme catalyses a 2-methoxy-6-(all-trans-polyprenyl)benzene-1,4-diol + S-adenosyl-L-methionine = a 5-methoxy-2-methyl-3-(all-trans-polyprenyl)benzene-1,4-diol + S-adenosyl-L-homocysteine + H(+). It participates in quinol/quinone metabolism; menaquinone biosynthesis; menaquinol from 1,4-dihydroxy-2-naphthoate: step 2/2. Its pathway is cofactor biosynthesis; ubiquinone biosynthesis. Methyltransferase required for the conversion of demethylmenaquinol (DMKH2) to menaquinol (MKH2) and the conversion of 2-polyprenyl-6-methoxy-1,4-benzoquinol (DDMQH2) to 2-polyprenyl-3-methyl-6-methoxy-1,4-benzoquinol (DMQH2). This chain is Ubiquinone/menaquinone biosynthesis C-methyltransferase UbiE, found in Dinoroseobacter shibae (strain DSM 16493 / NCIMB 14021 / DFL 12).